A 449-amino-acid polypeptide reads, in one-letter code: Biotin carboxylase (449 aa).

The Biotin carboxylation domain maps to 1–445 (MLDKIVIANR…NIHYLEKKLG (445 aa)). Residues Lys116, Lys159, 165–166 (GG), 201–204 (EKYL), His209, and His236 contribute to the ATP site. The ATP-grasp domain occupies 120-317 (IAAMKKAGVP…LIKEQLRIAA (198 aa)). Residue Lys238 coordinates hydrogencarbonate. 2 residues coordinate ATP: Glu276 and Glu288. The Mg(2+) site is built by Glu276, Glu288, and Asn290. Mn(2+)-binding residues include Glu276, Glu288, and Asn290. Hydrogencarbonate contacts are provided by Arg292, Val295, and Arg338. Residue Arg292 is part of the active site. Arg338 is a biotin binding site.

As to quaternary structure, acetyl-CoA carboxylase is a heterohexamer of biotin carboxyl carrier protein, biotin carboxylase and the two subunits of carboxyl transferase in a 2:2 complex. It depends on Mg(2+) as a cofactor. Mn(2+) is required as a cofactor.

It catalyses the reaction N(6)-biotinyl-L-lysyl-[protein] + hydrogencarbonate + ATP = N(6)-carboxybiotinyl-L-lysyl-[protein] + ADP + phosphate + H(+). Its pathway is lipid metabolism; malonyl-CoA biosynthesis; malonyl-CoA from acetyl-CoA: step 1/1. Its function is as follows. This protein is a component of the acetyl coenzyme A carboxylase complex; first, biotin carboxylase catalyzes the carboxylation of the carrier protein and then the transcarboxylase transfers the carboxyl group to form malonyl-CoA. The sequence is that of Biotin carboxylase (accC) from Escherichia coli O157:H7.